The sequence spans 949 residues: Probable transcriptional regulatory protein STB4 (949 aa).

The segment at residues 87–113 is a DNA-binding region (zn(2)-C6 fungal-type); it reads CELCKKRKVKCDGNNPCLNCSKHQKEC. 2 stretches are compositionally biased toward low complexity: residues 164–178 and 200–212; these read DGVSSSASNSPNPNS and SGSNLNGENNNNS. 2 disordered regions span residues 164–214 and 862–888; these read DGVS…NSFP and GEREENADERQENPHNNSKRVPLATRS. Residues 862 to 874 are compositionally biased toward basic and acidic residues; it reads GEREENADERQEN.

Its subcellular location is the nucleus. In terms of biological role, binds to SIN3. The protein is Probable transcriptional regulatory protein STB4 (STB4) of Saccharomyces cerevisiae (strain ATCC 204508 / S288c) (Baker's yeast).